Consider the following 493-residue polypeptide: Trigger factor (493 aa).

Residues 169–254 (GDRVTMDYLG…VKEVAAPAET (86 aa)) enclose the PPIase FKBP-type domain. The disordered stretch occupies residues 439–493 (ELLAEDEDGDDTKPAKKSAKKKAAKAEDASAEGEEAAPKKKAAAKKKAADEGDAE).

The protein belongs to the FKBP-type PPIase family. Tig subfamily.

It is found in the cytoplasm. It carries out the reaction [protein]-peptidylproline (omega=180) = [protein]-peptidylproline (omega=0). Functionally, involved in protein export. Acts as a chaperone by maintaining the newly synthesized protein in an open conformation. Functions as a peptidyl-prolyl cis-trans isomerase. This chain is Trigger factor, found in Allorhizobium ampelinum (strain ATCC BAA-846 / DSM 112012 / S4) (Agrobacterium vitis (strain S4)).